Here is a 996-residue protein sequence, read N- to C-terminus: MPPPTFLLGLLLLLLLAAAAPAPASATPERDAYALSRLKASLVPSATNSTSAPLSDWDPAATPPAHCAFTGVTCDAATSRVVAINLTAVPLHGGALPPEVALLDALASLTVANCYLRGRLPPALASMPALRHLNLSNNNLSGPFPPPPPAAYFPALEIVDVYNNNLSGPLPPLGAPHARSLRYLHLGGNYFNGSIPDTFGDLAALEYLGLNGNALSGRVPPSLSRLSRLREMYVGYYNQYSGGVPREFGALQSLVRLDMSSCTLTGPIPPELARLSRLDTLFLALNQLTGEIPPELGALTSLRSLDLSINDLAGEIPASFAALTNLKLLNLFRNHLRGEIPAFLGDFPFLEVLQVWDNNLTGPLPPALGRNGRLKTLDVTSNHLTGTIPPDLCAGRNLQLLVLMDNGFFGSIPESLGDCKTLTRVRLGKNFLTGPVPAGLFDLPQANMLELTDNMLTGELPDVIAGDKIGMLMLGNNRIGGRIPAAIGNLPALQTLSLESNNFSGPLPPEIGRLRNLTRLNASGNALTGGIPRELMGCASLGAVDLSRNGLTGEIPDTVTSLKILCTLNVSRNRLSGELPAAMANMTSLTTLDVSYNQLSGPVPMQGQFLVFNESSFVGNPGLCSACPPSSGGARSPFSLRRWDSKKLLVWLVVLLTLLVLAVLGARKAHEAWREAARRRSGAWKMTAFQKLDFSADDVVECLKEDNIIGKGGAGIVYHGVTRGGAELAIKRLVGRGCGDHDRGFTAEVTTLGRIRHRNIVRLLGFVSNREANLLLYEYMPNGSLGEMLHGGKGGHLGWEARARVAAEAARGLCYLHHDCAPRIIHRDVKSNNILLDSAFEAHVADFGLAKFLGGGGATSECMSAIAGSYGYIAPEYAYTLRVDEKSDVYSFGVVLLELITGRRPVGSFGDGVDIVHWVRKVTADAAAAEEPVLLVADRRLAPEPVPLLADLYRVAMACVEEASTARPTMREVVHMLSTSAAAQPDVPHALCKVVD.

The N-terminal stretch at 1-26 (MPPPTFLLGLLLLLLLAAAAPAPASA) is a signal peptide. 21 LRR repeats span residues 78–103 (TSRV…VALL), 104–127 (DALA…LASM), 128–151 (PALR…PPAA), 153–178 (FPAL…APHA), 180–201 (SLRY…TFGD), 202–226 (LAAL…LSRL), 251–275 (LQSL…LARL), 276–299 (SRLD…LGAL), 300–323 (TSLR…FAAL), 325–349 (NLKL…DFPF), 351–371 (EVLQ…LGRN), 372–395 (GRLK…LCAG), 397–419 (NLQL…LGDC), 420–443 (KTLT…LFDL), 445–466 (QANM…VIAG), 467–490 (DKIG…IGNL), 491–514 (PALQ…IGRL), 516–538 (NLTR…LMGC), 539–562 (ASLG…VTSL), 563–586 (KILC…MANM), and 587–611 (TSLT…QFLV). Residues 646-666 (KKLLVWLVVLLTLLVLAVLGA) traverse the membrane as a helical segment. The Protein kinase domain maps to 703 to 978 (LKEDNIIGKG…TMREVVHMLS (276 aa)). ATP is bound by residues 709-717 (IGKGGAGIV) and Lys-731. Catalysis depends on Asp-828, which acts as the Proton acceptor.

The protein belongs to the protein kinase superfamily. Ser/Thr protein kinase family. As to expression, highly expressed in the apex of the vegetative seedlings. Lower expression in young leaves, ears and tassels, embryos and roots. Not expressed in the shoot meristem itself. Detected in the three outermost layers of the inflorescence meristem, and on its flanks at positions of prospective spikelet pair meristems. Not confined to meristematic cells but also detected in primordia of glumes, lemmas and stamens.

It localises to the membrane. The catalysed reaction is L-seryl-[protein] + ATP = O-phospho-L-seryl-[protein] + ADP + H(+). It catalyses the reaction L-threonyl-[protein] + ATP = O-phospho-L-threonyl-[protein] + ADP + H(+). Receptor-like kinase protein that regulates meristem size during inflorescence and flower development. Promotes vegetative meristem growth and restricts inflorescence and floral meristem growth. Based on additive and synergistic phenotypes of double mutants, it is probable that unlike CLV1 and CLV2 in A.thaliana, TD1 and FAE2 do not function exclusively in a single pathway. However, KN-1 and TD1 do function in a linear pathway to maintain vegetative meristem homeostasis, but they may interact with different partners during development. In Zea mays (Maize), this protein is Leucine-rich repeat receptor-like kinase protein THICK TASSEL DWARF1 (TD1).